A 339-amino-acid chain; its full sequence is Homocysteine S-methyltransferase 2 (339 aa).

A Hcy-binding domain is found at 12-326 (AVRRWVDAAG…NTIRAIHRTL (315 aa)). Zn(2+) is bound by residues Cys-244, Cys-311, and Cys-312.

As to quaternary structure, monomer. The cofactor is Zn(2+).

It carries out the reaction S-methyl-L-methionine + L-homocysteine = 2 L-methionine + H(+). Functionally, catalyzes methyl transfer from S-methylmethionine (SMM) to adenosyl-L-homocysteine (AdoMet). SMM degradation (by HMT-1, HMT-2, HMT-3 and HMT-4) and biosynthesis (by MMT1) constitute the SMM cycle in plants, which is probably required to achieve short term control of AdoMet level. This chain is Homocysteine S-methyltransferase 2 (HMT-2), found in Zea mays (Maize).